Reading from the N-terminus, the 129-residue chain is Small ribosomal subunit protein uS11 (129 aa).

This sequence belongs to the universal ribosomal protein uS11 family. Part of the 30S ribosomal subunit. Interacts with proteins S7 and S18. Binds to IF-3.

In terms of biological role, located on the platform of the 30S subunit, it bridges several disparate RNA helices of the 16S rRNA. Forms part of the Shine-Dalgarno cleft in the 70S ribosome. This is Small ribosomal subunit protein uS11 from Haemophilus ducreyi (strain 35000HP / ATCC 700724).